The primary structure comprises 187 residues: Ribose 1,5-bisphosphate phosphokinase PhnN (187 aa).

Position 10–17 (10–17 (GPSGSGKD)) interacts with ATP.

Belongs to the ribose 1,5-bisphosphokinase family.

It catalyses the reaction alpha-D-ribose 1,5-bisphosphate + ATP = 5-phospho-alpha-D-ribose 1-diphosphate + ADP. The protein operates within metabolic intermediate biosynthesis; 5-phospho-alpha-D-ribose 1-diphosphate biosynthesis; 5-phospho-alpha-D-ribose 1-diphosphate from D-ribose 5-phosphate (route II): step 3/3. Functionally, catalyzes the phosphorylation of ribose 1,5-bisphosphate to 5-phospho-D-ribosyl alpha-1-diphosphate (PRPP). This chain is Ribose 1,5-bisphosphate phosphokinase PhnN, found in Klebsiella pneumoniae subsp. pneumoniae (strain ATCC 700721 / MGH 78578).